The sequence spans 532 residues: Phosphoenolpyruvate carboxykinase (ATP) (532 aa).

Residues Arg-60, Tyr-194, and Lys-200 each contribute to the substrate site. Residues Lys-200, His-219, and 237-245 (GLSGTGKTT) each bind ATP. Positions 200 and 219 each coordinate Mn(2+). Asp-258 contributes to the Mn(2+) binding site. 3 residues coordinate ATP: Glu-286, Arg-324, and Thr-449. Substrate is bound at residue Arg-324.

Belongs to the phosphoenolpyruvate carboxykinase (ATP) family. It depends on Mn(2+) as a cofactor.

It is found in the cytoplasm. It catalyses the reaction oxaloacetate + ATP = phosphoenolpyruvate + ADP + CO2. It functions in the pathway carbohydrate biosynthesis; gluconeogenesis. In terms of biological role, involved in the gluconeogenesis. Catalyzes the conversion of oxaloacetate (OAA) to phosphoenolpyruvate (PEP) through direct phosphoryl transfer between the nucleoside triphosphate and OAA. The chain is Phosphoenolpyruvate carboxykinase (ATP) from Ruegeria pomeroyi (strain ATCC 700808 / DSM 15171 / DSS-3) (Silicibacter pomeroyi).